Reading from the N-terminus, the 252-residue chain is Phosphoribosyl-ATP pyrophosphatase (252 aa).

Belongs to the PRA-PH family.

The protein resides in the cytoplasm. The enzyme catalyses 1-(5-phospho-beta-D-ribosyl)-ATP + H2O = 1-(5-phospho-beta-D-ribosyl)-5'-AMP + diphosphate + H(+). Its pathway is amino-acid biosynthesis; L-histidine biosynthesis; L-histidine from 5-phospho-alpha-D-ribose 1-diphosphate: step 2/9. The sequence is that of Phosphoribosyl-ATP pyrophosphatase from Magnetococcus marinus (strain ATCC BAA-1437 / JCM 17883 / MC-1).